The chain runs to 648 residues: Spastin (648 aa).

Over 1-40 (MASTVALLRDSSDDRENFDDGETDCVQVGRKRKLTVFFYP) the chain is Cytoplasmic. Positions 41 to 61 (LLLVFWLLRWVFYQFFLVLCF) form an intramembrane region, helical. The Cytoplasmic segment spans residues 62–648 (VCRGFVPRRH…WNREFGDITV (587 aa)). An MIT domain is found at 99-174 (HKKAFDFISK…EMARDRLDFL (76 aa)). Residues 188 to 346 (PWHGGVAPAQ…SQRSLLSSRV (159 aa)) are disordered. Positions 247 to 266 (TGVTLRRQQQQQLGGVSTVS) are enriched in low complexity. ATP is bound at residue 414–421 (GPPGNGKT).

Belongs to the AAA ATPase family. Spastin subfamily. As to quaternary structure, homohexamer. The homohexamer is stabilized by ATP-binding. The homohexamer may adopt a ring conformation through which microtubules pass prior to being severed. Interacts with microtubules.

Its subcellular location is the membrane. The protein localises to the cytoplasm. The protein resides in the cytoskeleton. It localises to the microtubule organizing center. It is found in the centrosome. It catalyses the reaction n ATP + n H2O + a microtubule = n ADP + n phosphate + (n+1) alpha/beta tubulin heterodimers.. Functionally, ATP-dependent microtubule severing protein. Microtubule severing may promote reorganization of cellular microtubule arrays and the release of microtubules from the microtubule organizing center following nucleation. This chain is Spastin (spas), found in Ixodes scapularis (Black-legged tick).